The primary structure comprises 629 residues: tRNA uridine 5-carboxymethylaminomethyl modification enzyme MnmG (629 aa).

Glycine 13–glycine 18 is a binding site for FAD. Glycine 273 to phenylalanine 287 is a binding site for NAD(+).

The protein belongs to the MnmG family. In terms of assembly, homodimer. Heterotetramer of two MnmE and two MnmG subunits. FAD is required as a cofactor.

The protein resides in the cytoplasm. NAD-binding protein involved in the addition of a carboxymethylaminomethyl (cmnm) group at the wobble position (U34) of certain tRNAs, forming tRNA-cmnm(5)s(2)U34. This is tRNA uridine 5-carboxymethylaminomethyl modification enzyme MnmG from Pseudoalteromonas translucida (strain TAC 125).